The sequence spans 84 residues: Small ribosomal subunit protein uS17 (84 aa).

This sequence belongs to the universal ribosomal protein uS17 family. In terms of assembly, part of the 30S ribosomal subunit.

In terms of biological role, one of the primary rRNA binding proteins, it binds specifically to the 5'-end of 16S ribosomal RNA. This is Small ribosomal subunit protein uS17 from Clostridioides difficile (strain 630) (Peptoclostridium difficile).